Here is a 228-residue protein sequence, read N- to C-terminus: uncharacterized protein (228 aa).

Residues 1–28 (MRKKRVITCVMAASLTLGSLLPAGYASA) form the signal peptide.

This is an uncharacterized protein from Bacillus subtilis (strain 168).